We begin with the raw amino-acid sequence, 1084 residues long: Teashirt homolog 1 (1084 aa).

Disordered stretches follow at residues 49–108 (EETE…SVSY), 140–167 (NSAT…TAST), and 269–298 (GHYR…MEME). Composition is skewed to polar residues over residues 57 to 71 (QSYQ…TNQD) and 140 to 152 (NSAT…SQKE). C2H2-type zinc fingers lie at residues 246 to 270 (FRCK…ETGH) and 307 to 331 (LKCM…KTKH). The span at 269 to 284 (GHYRDDNRDKDSEKTK) shows a compositional bias: basic and acidic residues. The C2H2-type 3; atypical zinc-finger motif lies at 416–440 (LKCMECGSSHDTLQQLTAHMMVTGH). Disordered stretches follow at residues 467 to 534 (SIPL…EKFE) and 653 to 728 (TGKV…LKAK). Basic and acidic residues-rich tracts occupy residues 496–534 (SEEK…EKFE), 653–671 (TGKV…EKSS), and 681–714 (KENK…ESTL). S771 is subject to Phosphoserine. A disordered region spans residues 855–879 (GRLTPKSSTPSTVSEKSDADGSSFE). Over residues 859–868 (PKSSTPSTVS) the composition is skewed to polar residues. The homeobox; atypical DNA-binding region spans 891–961 (RKGRQSNWNP…NVKYQLRRTG (71 aa)). 2 C2H2-type zinc fingers span residues 976 to 998 (FFCN…LETH) and 1044 to 1067 (FQCK…SKTH).

It belongs to the teashirt C2H2-type zinc-finger protein family. As to quaternary structure, interacts (via homeobox domain) with APBB1 (via PID domain 1).

The protein resides in the nucleus. Functionally, probable transcriptional regulator involved in developmental processes. May act as a transcriptional repressor (Potential). In Mus musculus (Mouse), this protein is Teashirt homolog 1 (Tshz1).